The following is a 362-amino-acid chain: Chorismate synthase (362 aa).

Arginine 47 is an NADP(+) binding site. Residues 124–126, glycine 286, 301–305, and arginine 327 each bind FMN; these read RSS and KPTAT.

It belongs to the chorismate synthase family. As to quaternary structure, homotetramer. FMNH2 is required as a cofactor.

The enzyme catalyses 5-O-(1-carboxyvinyl)-3-phosphoshikimate = chorismate + phosphate. It functions in the pathway metabolic intermediate biosynthesis; chorismate biosynthesis; chorismate from D-erythrose 4-phosphate and phosphoenolpyruvate: step 7/7. Catalyzes the anti-1,4-elimination of the C-3 phosphate and the C-6 proR hydrogen from 5-enolpyruvylshikimate-3-phosphate (EPSP) to yield chorismate, which is the branch point compound that serves as the starting substrate for the three terminal pathways of aromatic amino acid biosynthesis. This reaction introduces a second double bond into the aromatic ring system. The chain is Chorismate synthase from Synechococcus sp. (strain ATCC 27144 / PCC 6301 / SAUG 1402/1) (Anacystis nidulans).